A 620-amino-acid polypeptide reads, in one-letter code: Glutathione-regulated potassium-efflux system protein KefC (620 aa).

Topologically, residues 1-3 are periplasmic; the sequence is MDS. The chain crosses the membrane as a helical span at residues 4–24; that stretch reads HTLIQALIYLGSAALIVPIAV. Arginine 25 is a topological domain (cytoplasmic). The helical transmembrane segment at 26–46 threads the bilayer; that stretch reads LGLGSVLGYLIAGCIIGPWGL. Topologically, residues 47-53 are periplasmic; it reads RLVTDAE. The chain crosses the membrane as a helical span at residues 54–74; that stretch reads SILHFAEIGVVLMLFIIGLEL. Topologically, residues 75-89 are cytoplasmic; sequence DPQRLWKLRAAVFGG. The chain crosses the membrane as a helical span at residues 90-110; sequence GALQMVICGGLLGLFCMLLGL. The Periplasmic portion of the chain corresponds to 111–113; the sequence is RWQ. The chain crosses the membrane as a helical span at residues 114-134; that stretch reads VAELIGMTLALSSTAIAMQAM. Residues 135-148 lie on the Cytoplasmic side of the membrane; the sequence is NERNLMVTQMGRSA. Residues 149–169 form a helical membrane-spanning segment; the sequence is FAVLLFQDIAAIPLVAMIPLL. Topologically, residues 170–177 are periplasmic; sequence AASSASTT. The helical transmembrane segment at 178-198 threads the bilayer; it reads MGAFVLSALKVAGALALVVLL. At 199 to 213 the chain is on the cytoplasmic side; sequence GRYVTRPALRFVARS. The helical transmembrane segment at 214–233 threads the bilayer; the sequence is GLREVFSAVALFLVFGFGLL. Topologically, residues 234-236 are periplasmic; it reads LEE. Residues 237–254 traverse the membrane as a helical segment; that stretch reads VGLSMAMGAFLAGVLLAS. Over 255–269 the chain is Cytoplasmic; it reads SEYRHALESDIEPFK. Residues 270–290 traverse the membrane as a helical segment; sequence GLLLGLFFIGVGMSIDFGTLL. Topologically, residues 291–293 are periplasmic; that stretch reads ENP. Residues 294-314 traverse the membrane as a helical segment; sequence LRIVILLLGFLIIKIAMLWLI. Over 315–326 the chain is Cytoplasmic; it reads ARPLQVPNKQRR. The chain crosses the membrane as a helical span at residues 327 to 347; the sequence is WFAVLLGQGSEFAFVVFGAAQ. Residues 348–358 lie on the Periplasmic side of the membrane; the sequence is MANVLEPEWAK. A helical transmembrane segment spans residues 359 to 379; that stretch reads SLTLAVALSMAATPILLVILN. Topologically, residues 380 to 620 are cytoplasmic; the sequence is RLEQSSTEEA…ADEPETKPSS (241 aa). The region spanning 399-518 is the RCK N-terminal domain; the sequence is QPRVIIAGFG…AGVEKPERET (120 aa). The tract at residues 597–620 is disordered; it reads GWQGTEEGKHTGNMADEPETKPSS.

The protein belongs to the monovalent cation:proton antiporter 2 (CPA2) transporter (TC 2.A.37) family. KefC subfamily. As to quaternary structure, homodimer. Interacts with the regulatory subunit KefF.

The protein resides in the cell inner membrane. Pore-forming subunit of a potassium efflux system that confers protection against electrophiles. Catalyzes K(+)/H(+) antiport. This Escherichia coli O6:H1 (strain CFT073 / ATCC 700928 / UPEC) protein is Glutathione-regulated potassium-efflux system protein KefC.